The primary structure comprises 444 residues: DNA primase DnaG (444 aa).

The Toprim domain maps to D186–P260. Mg(2+)-binding residues include E192, D234, and D236.

It belongs to the archaeal DnaG primase family. As to quaternary structure, forms a ternary complex with MCM helicase and DNA. Component of the archaeal exosome complex. Mg(2+) serves as cofactor.

It catalyses the reaction ssDNA + n NTP = ssDNA/pppN(pN)n-1 hybrid + (n-1) diphosphate.. Functionally, RNA polymerase that catalyzes the synthesis of short RNA molecules used as primers for DNA polymerase during DNA replication. Also part of the exosome, which is a complex involved in RNA degradation. Acts as a poly(A)-binding protein that enhances the interaction between heteromeric, adenine-rich transcripts and the exosome. This Thermoplasma volcanium (strain ATCC 51530 / DSM 4299 / JCM 9571 / NBRC 15438 / GSS1) protein is DNA primase DnaG.